A 328-amino-acid polypeptide reads, in one-letter code: Malate dehydrogenase (328 aa).

11-17 (GAAGQIG) serves as a coordination point for NAD(+). Residues R94 and R100 each contribute to the substrate site. Residues N107, Q114, and 131-133 (VGN) each bind NAD(+). Residues N133 and R164 each coordinate substrate. The active-site Proton acceptor is H189.

Belongs to the LDH/MDH superfamily. MDH type 2 family.

The enzyme catalyses (S)-malate + NAD(+) = oxaloacetate + NADH + H(+). Its function is as follows. Catalyzes the reversible oxidation of malate to oxaloacetate. This Stenotrophomonas maltophilia (strain K279a) protein is Malate dehydrogenase.